Reading from the N-terminus, the 499-residue chain is Patatin-like protein 6 (499 aa).

The PNPLA domain maps to 111-314 (LSIDSGGMRG…AMSNPTAAAI (204 aa)). The GGXR signature appears at 116–119 (GGMR). Residue Ser-155 is the Nucleophile of the active site. Asp-301 serves as the catalytic Proton acceptor. The DGA/G motif lies at 301 to 303 (DGG).

This sequence belongs to the patatin family. Highly expressed in siliques and at lower levels in roots and flowers.

In terms of biological role, possesses non-specific lipolytic acyl hydrolase (LAH) activity. Hydrolyzes phospholipids as well as galactolipids. May play a role in disease resistance. The polypeptide is Patatin-like protein 6 (PLP6) (Arabidopsis thaliana (Mouse-ear cress)).